The following is a 284-amino-acid chain: MTAQLIDGKAIAANLRQQIAQRVTERRQQGLRVPGLAVILVGTDPASQVYVAHKRKDCEEVGFLSQAYDLPAETSQDDLLALIDRLNDDPAIDGILVQLPLPAHLDASLLLERIHPDKDVDGFHPYNIGRLAQRMPLLRPCTPKGIMTLLASTGADLYGMDAVVVGASNIVGRPMALELLLGGCTVTVTHRFTRDLADHVSRADLVVVAAGKPGLVKGEWIKEGAIVIDVGINRQADGRLVGDVEYEVAAQRASWITPVPGGVGPMTRACLLENTLHAAEHLHD.

NADP(+) is bound by residues 166–168 and I232; that span reads GAS.

Belongs to the tetrahydrofolate dehydrogenase/cyclohydrolase family. In terms of assembly, homodimer.

The enzyme catalyses (6R)-5,10-methylene-5,6,7,8-tetrahydrofolate + NADP(+) = (6R)-5,10-methenyltetrahydrofolate + NADPH. The catalysed reaction is (6R)-5,10-methenyltetrahydrofolate + H2O = (6R)-10-formyltetrahydrofolate + H(+). It functions in the pathway one-carbon metabolism; tetrahydrofolate interconversion. Functionally, catalyzes the oxidation of 5,10-methylenetetrahydrofolate to 5,10-methenyltetrahydrofolate and then the hydrolysis of 5,10-methenyltetrahydrofolate to 10-formyltetrahydrofolate. The protein is Bifunctional protein FolD of Pseudomonas aeruginosa (strain LESB58).